The primary structure comprises 230 residues: Probable methylthioribulose-1-phosphate dehydratase (230 aa).

Cysteine 87 lines the substrate pocket. Zn(2+) is bound by residues histidine 105 and histidine 107. Residue glutamate 129 is the Proton donor/acceptor of the active site. Histidine 185 contacts Zn(2+).

Belongs to the aldolase class II family. MtnB subfamily. Zn(2+) serves as cofactor.

It localises to the cytoplasm. The catalysed reaction is 5-(methylsulfanyl)-D-ribulose 1-phosphate = 5-methylsulfanyl-2,3-dioxopentyl phosphate + H2O. It participates in amino-acid biosynthesis; L-methionine biosynthesis via salvage pathway; L-methionine from S-methyl-5-thio-alpha-D-ribose 1-phosphate: step 2/6. Its function is as follows. Catalyzes the dehydration of methylthioribulose-1-phosphate (MTRu-1-P) into 2,3-diketo-5-methylthiopentyl-1-phosphate (DK-MTP-1-P). This chain is Probable methylthioribulose-1-phosphate dehydratase, found in Drosophila pseudoobscura pseudoobscura (Fruit fly).